The primary structure comprises 342 residues: Prostasin (342 aa).

The first 29 residues, Met-1–Arg-29, serve as a signal peptide directing secretion. Positions Ala-30–Gly-32 are cleaved as a propeptide — activation peptide. 2 disulfide bridges follow: Cys-37-Cys-154 and Cys-70-Cys-86. In terms of domain architecture, Peptidase S1 spans Ile-45–Ala-286. The active-site Charge relay system is the His-85. Residue Asn-110 is glycosylated (N-linked (GlcNAc...) asparagine). Residue Asp-134 is the Charge relay system of the active site. The N-linked (GlcNAc...) asparagine glycan is linked to Asn-159. 3 cysteine pairs are disulfide-bonded: Cys-168–Cys-244, Cys-201–Cys-223, and Cys-234–Cys-262. Ser-238 acts as the Charge relay system in catalysis. Residues Leu-320–Leu-340 traverse the membrane as a helical segment. Residues Pro-323–His-342 constitute a propeptide that is removed on maturation.

The protein belongs to the peptidase S1 family. Heterodimer of two chains, light and heavy, held by a disulfide bond.

Its subcellular location is the cell membrane. It is found in the secreted. The protein resides in the extracellular space. Its function is as follows. Possesses a trypsin-like cleavage specificity with a preference for poly-basic substrates. Stimulates epithelial sodium channel (ENaC) activity through activating cleavage of the gamma subunits (SCNN1G). The protein is Prostasin (Prss8) of Mus musculus (Mouse).